We begin with the raw amino-acid sequence, 379 residues long: MTNTRKNHPLLKIINNSLIDLPTPPNISSLWNFGSLLGACLTIQIITGLFLAMHYTADTMTAFSSVAHICRDVNYGWTIRYLHANGASMFFLCLFIHVGRGLYYGSFTLLETWNVGITLLFSVMATAFMGYVLPWGQMSFWGATVITNLLSAIPYVGTDLVEWIWGGFSVGKATLTRFFALHFILPFITSALVMIHLLFLHETGSNNPLGVPSNSDKIPFHPYYTTKDFLGLLLLILLLMTMALFYPDLLGDPDNYTPANPLNTPPHIKPEWYFLFAYAILRSIPNKLGGVMALILSILILVMFPFLQPNKQQTMMFRPLSQFLFWILVADLLTLTWIGGQPVEDPFINIGQMASMLYFSLMIFIMPTTCFIENKMLKW.

A run of 4 helical transmembrane segments spans residues 33–53 (FGSLLGACLTIQIITGLFLAM), 77–98 (WTIRYLHANGASMFFLCLFIHV), 113–133 (WNVGITLLFSVMATAFMGYVL), and 178–198 (FFALHFILPFITSALVMIHLL). Heme b-binding residues include H83 and H97. Residues H182 and H196 each contribute to the heme b site. H201 contacts a ubiquinone. The next 4 helical transmembrane spans lie at 226 to 246 (TKDFLGLLLLILLLMTMALFY), 288 to 308 (LGGVMALILSILILVMFPFLQ), 320 to 340 (LSQFLFWILVADLLTLTWIGG), and 347 to 367 (FINIGQMASMLYFSLMIFIMP).

This sequence belongs to the cytochrome b family. As to quaternary structure, the cytochrome bc1 complex contains 11 subunits: 3 respiratory subunits (MT-CYB, CYC1 and UQCRFS1), 2 core proteins (UQCRC1 and UQCRC2) and 6 low-molecular weight proteins (UQCRH/QCR6, UQCRB/QCR7, UQCRQ/QCR8, UQCR10/QCR9, UQCR11/QCR10 and a cleavage product of UQCRFS1). This cytochrome bc1 complex then forms a dimer. Requires heme b as cofactor.

It localises to the mitochondrion inner membrane. Its function is as follows. Component of the ubiquinol-cytochrome c reductase complex (complex III or cytochrome b-c1 complex) that is part of the mitochondrial respiratory chain. The b-c1 complex mediates electron transfer from ubiquinol to cytochrome c. Contributes to the generation of a proton gradient across the mitochondrial membrane that is then used for ATP synthesis. The sequence is that of Cytochrome b (MT-CYB) from Lepilemur sahamalazensis (Sahamalaza sportive lemur).